Consider the following 171-residue polypeptide: Small ribosomal subunit protein uS4 (171 aa).

An S4 RNA-binding domain is found at 103–167; sequence RRLQTLVHKR…SPMKKQIEAA (65 aa).

Belongs to the universal ribosomal protein uS4 family. As to quaternary structure, part of the 30S ribosomal subunit. Contacts protein S5. The interaction surface between S4 and S5 is involved in control of translational fidelity.

One of the primary rRNA binding proteins, it binds directly to 16S rRNA where it nucleates assembly of the body of the 30S subunit. Its function is as follows. With S5 and S12 plays an important role in translational accuracy. The sequence is that of Small ribosomal subunit protein uS4 from Methanothermobacter thermautotrophicus (strain ATCC 29096 / DSM 1053 / JCM 10044 / NBRC 100330 / Delta H) (Methanobacterium thermoautotrophicum).